Reading from the N-terminus, the 941-residue chain is Cell wall protein IFF3 (941 aa).

The signal sequence occupies residues 1 to 20; the sequence is MQLFQNILVSIALLTQVVFA. 9 N-linked (GlcNAc...) asparagine glycosylation sites follow: Asn-36, Asn-367, Asn-686, Asn-732, Asn-790, Asn-818, Asn-825, Asn-884, and Asn-917. Asn-917 carries GPI-anchor amidated asparagine lipidation. The propeptide at 918–941 is removed in mature form; sequence GSNKESIENIKYLTLVVFGLMMFM.

The protein belongs to the HYR1/IFF family. In terms of processing, the GPI-anchor is attached to the protein in the endoplasmic reticulum and serves to target the protein to the cell surface. There, the glucosamine-inositol phospholipid moiety is cleaved off and the GPI-modified mannoprotein is covalently attached via its lipidless GPI glycan remnant to the 1,6-beta-glucan of the outer cell wall layer.

It is found in the secreted. The protein localises to the cell wall. It localises to the membrane. In terms of biological role, GPI-anchored cell wall protein involved in cell wall organization, hyphal growth, as well as in host-fungal interaction and virulence. This is Cell wall protein IFF3 (IFF3) from Candida albicans (strain SC5314 / ATCC MYA-2876) (Yeast).